We begin with the raw amino-acid sequence, 214 residues long: Pyrophosphatase PpaX (214 aa).

Residue Asp9 is the Nucleophile of the active site.

The protein belongs to the HAD-like hydrolase superfamily. PpaX family. Mg(2+) is required as a cofactor.

It catalyses the reaction diphosphate + H2O = 2 phosphate + H(+). In terms of biological role, hydrolyzes pyrophosphate formed during P-Ser-HPr dephosphorylation by HPrK/P. Might play a role in controlling the intracellular pyrophosphate pool. This chain is Pyrophosphatase PpaX, found in Oceanobacillus iheyensis (strain DSM 14371 / CIP 107618 / JCM 11309 / KCTC 3954 / HTE831).